Consider the following 325-residue polypeptide: Natural cytotoxicity triggering receptor 1 (325 aa).

Positions 1-16 (MLPTLTALLCLGLCLS) are cleaved as a signal peptide. Residues 17–258 (QRINTEKQTL…WDHTAQNLIR (242 aa)) are Extracellular-facing. Ig-like domains are found at residues 42 to 100 (GNSV…TCFY) and 137 to 192 (GENV…RCFG). C49 and C98 are oxidised to a cystine. N-linked (GlcNAc...) asparagine glycosylation is present at N139. A disulfide bridge connects residues C144 and C190. N-linked (GlcNAc...) asparagine glycosylation is present at N216. The helical transmembrane segment at 259-279 (IGLACIIVMALVWLLAEDWLS) threads the bilayer. The Cytoplasmic portion of the chain corresponds to 280 to 325 (RRKDHEKLNRLTSWECRGRRRMHRYHEEEQRDAISMRELKATPGDM).

The protein belongs to the natural cytotoxicity receptor (NCR) family. Interacts with CD3Z and FCER1G. As to expression, weakly expressed in spleen, heart and lung.

The protein localises to the cell membrane. In terms of biological role, cytotoxicity-activating receptor that may contribute to the increased efficiency of activated natural killer (NK) cells to mediate tumor cell lysis. This chain is Natural cytotoxicity triggering receptor 1 (Ncr1), found in Rattus norvegicus (Rat).